The primary structure comprises 182 residues: UPF0397 protein SPP_0507 (182 aa).

Helical transmembrane passes span 10–30, 46–66, 73–93, 109–129, and 148–168; these read VVAV…NIPT, LLSI…GHAI, YGLW…VGLF, ILIF…VLAP, and IVAG…LLLA.

This sequence belongs to the UPF0397 family.

It is found in the cell membrane. The polypeptide is UPF0397 protein SPP_0507 (Streptococcus pneumoniae (strain P1031)).